A 356-amino-acid polypeptide reads, in one-letter code: Probable G-protein coupled receptor 32 (356 aa).

Topologically, residues 1–44 are extracellular; sequence MNGVSEGTRGCSDRQPGVLTRDRSCSRKMNSSGCLSEEVGSLRP. An N-linked (GlcNAc...) asparagine glycan is attached at asparagine 30. Residues 45–67 form a helical membrane-spanning segment; it reads LTVVILSASIVVGVLGNGLVLWM. At 68–78 the chain is on the cytoplasmic side; the sequence is TVFRMARTVST. A helical transmembrane segment spans residues 79-100; sequence VCFFHLALADFMLSLSLPIAMY. Over 101-116 the chain is Extracellular; the sequence is YIVSRQWLLGEWACKL. Cysteine 114 and cysteine 191 form a disulfide bridge. The chain crosses the membrane as a helical span at residues 117–137; the sequence is YITFVFLSYFASNCLLVFISV. The Cytoplasmic segment spans residues 138-156; it reads DRCISVLYPVWALNHRTVQ. The helical transmembrane segment at 157–178 threads the bilayer; it reads RASWLAFGVWLLAAALCSAHLK. The Extracellular segment spans residues 179–220; that stretch reads FRTTRKWNGCTHCYLAFNSDNETAQIWIEGVVEGHIIGTIGH. Asparagine 199 carries N-linked (GlcNAc...) asparagine glycosylation. A helical membrane pass occupies residues 221 to 241; sequence FLLGFLGPLAIIGTCAHLIRA. The Cytoplasmic segment spans residues 242 to 257; that stretch reads KLLREGWVHANRPKRL. The chain crosses the membrane as a helical span at residues 258–280; that stretch reads LLVLVSAFFIFWSPFNVVLLVHL. Topologically, residues 281-300 are extracellular; sequence WRRVMLKEIYHPRMLLILQA. The helical transmembrane segment at 301–320 threads the bilayer; it reads SFALGCVNSSLNPFLYVFVG. The Cytoplasmic portion of the chain corresponds to 321-356; sequence RDFQEKFFQSLTSALARAFGEEEFLSSCPRGNAPRE.

This sequence belongs to the G-protein coupled receptor 1 family. As to expression, expressed in resting primary human macrophages.

It is found in the cell membrane. In terms of biological role, G-protein coupled receptor that binds to several ligands including resolvin D1 (RvD1) with high affinity, leading to rapid and transient activation of numerous intracellular signaling pathways. In macrophages, enhances the RvD1-stimulated phagocytic and clearance functions. Macrophages migrate less toward different chemoattractant stimuli but phagocytose more microbial particles. Prevents the increase in Ca(2+) and activation of ERK1/2 used by histamine and its H1 receptor subtype to induce goblet cell secretion by activating PKC and GRK2 to counter-regulate the histamine receptor. The chain is Probable G-protein coupled receptor 32 (GPR32) from Homo sapiens (Human).